The following is a 590-amino-acid chain: Protein Spindly (590 aa).

Positions 1 to 401 (MSDLEDEIKV…SMARMKALSE (401 aa)) form a coiled coil. Residues 446–590 (NKAQVQKRRR…KTMANECAQQ (145 aa)) are disordered. 2 stretches are compositionally biased toward basic and acidic residues: residues 483-497 (SNEKAEEKTPSHPVE) and 518-527 (RESKSVRICE). 2 stretches are compositionally biased toward polar residues: residues 541 to 554 (VNDSNSKNVDQTHQ) and 572 to 590 (QQPTHVSSQKTMANECAQQ).

It belongs to the Spindly family.

It localises to the chromosome. The protein localises to the centromere. It is found in the kinetochore. In terms of biological role, required for the localization of dynein and dynactin to the mitotic kintochore. Dynein is believed to control the initial lateral interaction between the kinetochore and spindle microtubules and to facilitate the subsequent formation of end-on kinetochore-microtubule attachments mediated by the NDC80 complex. May act as an adapter protein linking the dynein motor complex to various cargos. The polypeptide is Protein Spindly (spdl1) (Danio rerio (Zebrafish)).